Reading from the N-terminus, the 1948-residue chain is Receptor-type tyrosine-protein phosphatase S (1948 aa).

A signal peptide spans methionine 1–alanine 29. At glutamate 30–glycine 1282 the chain is on the extracellular side. Ig-like C2-type domains follow at residues proline 33–threonine 123, proline 135–tyrosine 233, and proline 245–threonine 327. 2 disulfide bridges follow: cysteine 54–cysteine 107 and cysteine 156–cysteine 216. The interval lysine 68–lysine 72 is important for binding to glycosaminoglycan chains. N-linked (GlcNAc...) asparagine glycans are attached at residues asparagine 263 and asparagine 308. A disulfide bridge connects residues cysteine 266 and cysteine 311. Fibronectin type-III domains are found at residues alanine 334–glutamine 424, alanine 429–glycine 523, glutamine 527–serine 616, proline 621–aspartate 718, proline 723–alanine 831, valine 832–glycine 930, histidine 931–aspartate 1033, and serine 1036–asparagine 1120. The tract at residues threonine 700–proline 724 is disordered. Low complexity predominate over residues glutamate 701–valine 713. Residue asparagine 733 is glycosylated (N-linked (GlcNAc...) asparagine). Asparagine 940 carries N-linked (GlcNAc...) asparagine glycosylation. The chain crosses the membrane as a helical span at residues leucine 1283–isoleucine 1303. Over leucine 1304–threonine 1948 the chain is Cytoplasmic. 2 stretches are compositionally biased toward basic and acidic residues: residues aspartate 1311–threonine 1321 and alanine 1331–glutamate 1340. A disordered region spans residues aspartate 1311 to glutamate 1340. Tyrosine-protein phosphatase domains are found at residues leucine 1393–alanine 1648 and methionine 1680–tyrosine 1939. Residues aspartate 1557, cysteine 1589 to arginine 1595, and glutamine 1633 each bind substrate. Residue cysteine 1589 is the Phosphocysteine intermediate of the active site. Residue cysteine 1880 is the Phosphocysteine intermediate of the active site.

Belongs to the protein-tyrosine phosphatase family. Receptor class 2A subfamily. Binding to large heparan sulfate proteoglycan structures promotes oligomerization. Binding to chondroitin sulfate proteoglycan does not lead to oligomerization. Interacts (via Ig-like domains) with NTRK3. Interacts (via Ig-like domains) with NTRK1, but does not form detectable complexes with NTRK2. Interacts with PPFIA1, PPFIA2 and PPFIA3. A cleavage occurs, separating the extracellular domain from the transmembrane segment. This process called 'ectodomain shedding' is thought to be involved in receptor desensitization, signal transduction and/or membrane localization. Detected in peripheral blood plasmacytoid dendritic cells (at protein level). Detected in all tissues tested except for placenta and liver. Detected in peripheral blood plasmacytoid dendritic cells.

The protein localises to the cell membrane. It is found in the cell projection. The protein resides in the axon. It localises to the perikaryon. Its subcellular location is the cytoplasmic vesicle. The protein localises to the secretory vesicle. It is found in the synaptic vesicle membrane. The protein resides in the synapse. It localises to the synaptosome. Its subcellular location is the postsynaptic density. The protein localises to the neuron projection. It is found in the growth cone. It catalyses the reaction O-phospho-L-tyrosyl-[protein] + H2O = L-tyrosyl-[protein] + phosphate. Its function is as follows. Cell surface receptor that binds to glycosaminoglycans, including chondroitin sulfate proteoglycans and heparan sulfate proteoglycan. Binding to chondroitin sulfate and heparan sulfate proteoglycans has opposite effects on PTPRS oligomerization and regulation of neurite outgrowth. Contributes to the inhibition of neurite and axonal outgrowth by chondroitin sulfate proteoglycans, also after nerve transection. Plays a role in stimulating neurite outgrowth in response to the heparan sulfate proteoglycan GPC2. Required for normal brain development, especially for normal development of the pituitary gland and the olfactory bulb. Functions as a tyrosine phosphatase. Mediates dephosphorylation of NTRK1, NTRK2 and NTRK3. Plays a role in down-regulation of signaling cascades that lead to the activation of Akt and MAP kinases. Down-regulates TLR9-mediated activation of NF-kappa-B, as well as production of TNF, interferon alpha and interferon beta. The sequence is that of Receptor-type tyrosine-protein phosphatase S (PTPRS) from Homo sapiens (Human).